Reading from the N-terminus, the 629-residue chain is Smc-like protein Sph1 (629 aa).

Coiled coils occupy residues 139–282 (LETE…LLDD) and 318–487 (AETT…NQFD).

This sequence belongs to the Sph1/Sph2 family.

It is found in the cytoplasm. In terms of biological role, may play a role in a late step of replication. This chain is Smc-like protein Sph1 (sph1), found in Halobacterium salinarum (strain ATCC 29341 / DSM 671 / R1).